The primary structure comprises 140 residues: Putative pre-16S rRNA nuclease (140 aa).

Belongs to the YqgF nuclease family.

It is found in the cytoplasm. In terms of biological role, could be a nuclease involved in processing of the 5'-end of pre-16S rRNA. This chain is Putative pre-16S rRNA nuclease, found in Vibrio vulnificus (strain YJ016).